Reading from the N-terminus, the 377-residue chain is Dehydrogenase/reductase SDR family member 13 (377 aa).

Residues 1–25 (MEALLLGAGLLLGAYVLVYYNLVKA) form the signal peptide. The NAD(+) site is built by S46 and I48. Position 170 (S170) interacts with substrate. The NAD(+) site is built by Y197, K201, and S232. Y197 serves as the catalytic Proton acceptor. Residues 309 to 377 (RLAGLGPGED…AKVEPEIQLS (69 aa)) form a disordered region. Over residues 317-331 (EDAEPDEDPQSEDSE) the composition is skewed to acidic residues. Residues 347–357 (SQPYPSPQSSP) show a composition bias toward low complexity. Positions 368 to 377 (AKVEPEIQLS) are enriched in basic and acidic residues.

It belongs to the short-chain dehydrogenases/reductases (SDR) family.

It localises to the secreted. Functionally, putative oxidoreductase. In Homo sapiens (Human), this protein is Dehydrogenase/reductase SDR family member 13.